A 725-amino-acid polypeptide reads, in one-letter code: Threonine--tRNA ligase, cytoplasmic (725 aa).

The TGS domain occupies 80–142; it reads EPIQITLPDG…EGNAKLELLK (63 aa).

The protein belongs to the class-II aminoacyl-tRNA synthetase family.

Its subcellular location is the cytoplasm. It carries out the reaction tRNA(Thr) + L-threonine + ATP = L-threonyl-tRNA(Thr) + AMP + diphosphate + H(+). This Caenorhabditis elegans protein is Threonine--tRNA ligase, cytoplasmic.